The chain runs to 1779 residues: Fibronectin type III domain-containing protein 1 (1779 aa).

A signal peptide spans 1–29; sequence MAPEARASPRLLLRAALLLLAALLPVASS. Fibronectin type-III domains are found at residues 33-126, 103-203, 207-302, and 307-402; these read PVDH…KAPR, PNKP…AEED, VPED…TPES, and APEN…IPTT. Polar residues predominate over residues 400–413; sequence PTTSSTEASVQPNG. Disordered regions lie at residues 400 to 442, 459 to 1108, 1120 to 1227, and 1330 to 1401; these read PTTS…MPPA, NGVA…RNLD, EENT…KPNG, and PTTT…PPGT. A compositionally biased stretch (low complexity) spans 423–437; it reads QQPSSSAPKVAASSQ. Residues 493-506 show a composition bias toward polar residues; it reads NPRSSRLETLNQKQ. Positions 534–554 are enriched in basic and acidic residues; that stretch reads SRKEGMDRRGPSLDPHPHPRV. 2 stretches are compositionally biased toward polar residues: residues 557 to 570 and 590 to 607; these read SASS…STDN and SSGS…TSAP. Positions 629-640 are enriched in low complexity; sequence ASSSTSRQSHSS. Serine 651 is modified (phosphoserine). Residues 676–694 are compositionally biased toward low complexity; sequence HASSSHTTSRTASSSHPSA. Serine 699 carries the post-translational modification Phosphoserine. Residues 707–720 show a composition bias toward basic and acidic residues; the sequence is DSDRAAEDTIRRAE. 2 stretches are compositionally biased toward polar residues: residues 763 to 784 and 861 to 875; these read PSVS…SLPA and PLSS…STTD. The span at 879-904 shows a compositional bias: low complexity; sequence PQTSPASTSRQPSPARPPASRSQPSP. Composition is skewed to polar residues over residues 957 to 971 and 1003 to 1020; these read APQN…TYED and VGSQ…SQAG. A compositionally biased stretch (low complexity) spans 1085–1097; the sequence is LSTSVKKWPSSSS. Over residues 1098–1108 the composition is skewed to basic and acidic residues; that stretch reads PRDKYADRNLD. Composition is skewed to polar residues over residues 1147 to 1159 and 1166 to 1177; these read NPAT…NTHS and RAPSSYSSTTPM. A compositionally biased stretch (low complexity) spans 1330–1389; it reads PTTTMPPSTTTTTVPPTTTLPPTTTTTRRTTTTRRTTTTRRPTTTTRATRRTTTTTTTPE. In terms of domain architecture, Fibronectin type-III 5 spans 1543–1637; that stretch reads APRNITVVAM…PSVSFVTESD (95 aa). Asparagine 1546 carries N-linked (GlcNAc...) asparagine glycosylation.

The protein localises to the secreted. In terms of biological role, may be an activator of G protein signaling. The protein is Fibronectin type III domain-containing protein 1 (Fndc1) of Rattus norvegicus (Rat).